Consider the following 686-residue polypeptide: Bromodomain-containing factor 1 (686 aa).

Disordered regions lie at residues 1–69 (MTDI…PAGL) and 85–150 (NGYN…NPIP). The segment covering 9–25 (NDVDVNGNNVNDDVSSN) has biased composition (low complexity). Basic and acidic residues predominate over residues 99–120 (QGLKKEEGGQGTKQEDLDENSK). Over residues 130 to 139 (EPAPAPPPEP) the composition is skewed to pro residues. Residues 145–254 (PQNPIPKHQQ…ASFEKHMLNM (110 aa)) form the Bromo 1 domain. Phosphoserine is present on S270. The tract at residues 283-304 (QTHNGRPKRTIHPPKSKDIYPY) is disordered. Positions 287–296 (GRPKRTIHPP) are enriched in basic residues. The Bromo 2 domain occupies 312–421 (KRLQQAMKFC…EVFNSKWADR (110 aa)). 4 disordered regions span residues 424 to 447 (LDDYDSDEDSRTQGDYDDYESEYS), 486 to 523 (IRKERRLARGSKKRGKRSKGRSGSKNASSKGRRDKKNK), 594 to 636 (SSGA…EQSR), and 649 to 686 (DSASPLSQNGSPGQIQSAAHNGFSSSSDDDVSSESEEE). S429 carries the phosphoserine modification. Positions 438 to 447 (DYDDYESEYS) are enriched in acidic residues. Residues 460 to 499 (AIQYLEEQLARMKVELQQLKKQELEKIRKERRLARGSKKR) adopt a coiled-coil conformation. Residues 488–507 (KERRLARGSKKRGKRSKGRS) show a composition bias toward basic residues. The 81-residue stretch at 518-598 (RDKKNKLKTV…RQYESSSGAS (81 aa)) folds into the NET domain. Composition is skewed to polar residues over residues 594 to 620 (SSGASNGLDGTSGVTRDASSLSPTSAG) and 652 to 671 (SPLSQNGSPGQIQSAAHNGF). Phosphoserine is present on residues S615 and S659. The span at 675–686 (SDDDVSSESEEE) shows a compositional bias: acidic residues.

The protein belongs to the BET family. In terms of assembly, interacts with the TFIID subunit TAF7 and with acetylated histones H3 and H4. Phosphorylated by the casein kinase CK2 complex.

Its subcellular location is the nucleus. In terms of biological role, transcription factor involved in the expression of a broad class of genes including snRNAs. Required for sporulation and DNA-damage repair. Prevents the spreading of SIR silencing at telomeres and protects histone H4, but not H3, from deacetylation. This Saccharomyces cerevisiae (strain ATCC 204508 / S288c) (Baker's yeast) protein is Bromodomain-containing factor 1 (BDF1).